A 177-amino-acid polypeptide reads, in one-letter code: Calerythrin (177 aa).

4 EF-hand domains span residues 5 to 40 (IASDRLKKRFDRWDFDGNGALERADFEKEAQHIAEA), 45 to 90 (AGAA…NLIF), 100 to 134 (VLGPVVKGTWGMCDKNADGQINADEFAAWLTALGM), and 134 to 169 (MSKAEAAEAFNQVDTNGNGELSLDELLTAVRDFHFG). Ca(2+) is bound by residues aspartate 18, aspartate 20, asparagine 22, and aspartate 29. Ca(2+)-binding residues include aspartate 113, asparagine 115, aspartate 117, glutamine 119, glutamate 124, aspartate 147, asparagine 149, asparagine 151, glutamate 153, and glutamate 158.

In Saccharopolyspora erythraea (Streptomyces erythraeus), this protein is Calerythrin.